Here is a 2869-residue protein sequence, read N- to C-terminus: uncharacterized protein (2869 aa).

The span at 1–10 (MNINRNNIND) shows a compositional bias: low complexity. 13 disordered regions span residues 1–132 (MNIN…SSNK), 171–349 (NNNN…DNYR), 380–485 (FNES…TSSS), 498–517 (KEKH…KPKK), 690–812 (NQNQ…NQNQ), 860–1074 (INNN…INSN), 1108–1175 (INNI…NSNS), 1188–1216 (SNSN…VDVD), 1224–1243 (VFIV…SVKT), 1340–1448 (ESNS…GNNI), 1476–1704 (IDNC…SNYY), 1731–1832 (NSNS…NEGF), and 2725–2773 (DRVR…NNNE). Positions 14-25 (HSTSFNDNFDSF) are enriched in polar residues. Composition is skewed to low complexity over residues 26 to 124 (GNQN…NPKN), 171 to 348 (NNNN…YDNY), 388 to 414 (NNNT…LNNN), 421 to 446 (YYDN…QTNK), and 454 to 478 (KNNN…NSNN). Residues 505 to 514 (HENGDISESK) are compositionally biased toward basic and acidic residues. Low complexity-rich tracts occupy residues 690 to 707 (NQNQ…QNHQ) and 714 to 749 (PQRQ…NQDQ). Residues 750-763 (YQDHDHEHEHDHDQ) are compositionally biased toward basic and acidic residues. Over residues 764–781 (NQNQNQNQHQSRNQNQDQ) the composition is skewed to low complexity. Over residues 782 to 795 (YQDHDHEHEHDHDQ) the composition is skewed to basic and acidic residues. 5 stretches are compositionally biased toward low complexity: residues 796-812 (NQNQ…NQNQ), 860-891 (INNN…QSQN), 898-911 (DNRI…SSRD), 921-991 (CDFN…SFNN), and 1000-1074 (NNHN…INSN). Low complexity predominate over residues 1188-1212 (SNSNGFNNNNSNDQRNIDSSSNSDI). The span at 1230–1243 (TSSNKSNRASSVKT) shows a compositional bias: polar residues. Composition is skewed to low complexity over residues 1377-1448 (DNGN…GNNI) and 1476-1639 (IDNC…NDND). The segment covering 1640 to 1659 (IGNDFDNDNDNDSYIDDDNN) has biased composition (acidic residues). 3 stretches are compositionally biased toward low complexity: residues 1660 to 1704 (VYDN…SNYY), 1731 to 1823 (NSNS…NNNS), and 2739 to 2754 (SSSG…SGGS). Residues 2758–2773 (NLDDSENESDSENNNE) show a composition bias toward acidic residues.

This is an uncharacterized protein from Dictyostelium discoideum (Social amoeba).